Consider the following 149-residue polypeptide: Flagellar assembly factor FliW (149 aa).

Belongs to the FliW family. As to quaternary structure, interacts with translational regulator CsrA and flagellin(s).

It is found in the cytoplasm. In terms of biological role, acts as an anti-CsrA protein, binds CsrA and prevents it from repressing translation of its target genes, one of which is flagellin. Binds to flagellin and participates in the assembly of the flagellum. This chain is Flagellar assembly factor FliW, found in Thermotoga maritima (strain ATCC 43589 / DSM 3109 / JCM 10099 / NBRC 100826 / MSB8).